A 512-amino-acid chain; its full sequence is Respiratory nitrate reductase 1 beta chain (512 aa).

4Fe-4S ferredoxin-type domains lie at 7–35 (VGMV…SREG), 175–206 (TFMM…KREE), and 208–237 (GIVL…FNWK). 7 residues coordinate [4Fe-4S] cluster: Cys-16, Cys-19, Cys-22, Cys-26, Cys-184, Cys-187, and Cys-192. [3Fe-4S] cluster contacts are provided by Cys-196, Cys-217, and Cys-223. [4Fe-4S] cluster is bound by residues Cys-227, Cys-244, Cys-247, Cys-259, and Cys-263.

In terms of assembly, dimer of heterotrimers each composed of an alpha, a beta and a gamma chain. Alpha and beta are catalytic chains; gamma chains are involved in binding the enzyme complex to the cytoplasmic membrane. The cofactor is [4Fe-4S] cluster. [3Fe-4S] cluster serves as cofactor.

It localises to the cell membrane. The enzyme catalyses nitrate + a quinol = a quinone + nitrite + H2O. Functionally, the nitrate reductase enzyme complex allows S.flexneri to use nitrate as an electron acceptor during anaerobic growth. The beta chain is an electron transfer unit containing four cysteine clusters involved in the formation of iron-sulfur centers. Electrons are transferred from the gamma chain to the molybdenum cofactor of the alpha subunit. The protein is Respiratory nitrate reductase 1 beta chain (narH) of Shigella flexneri.